Reading from the N-terminus, the 228-residue chain is Urease accessory protein UreF 1 (228 aa).

This sequence belongs to the UreF family. As to quaternary structure, ureD, UreF and UreG form a complex that acts as a GTP-hydrolysis-dependent molecular chaperone, activating the urease apoprotein by helping to assemble the nickel containing metallocenter of UreC. The UreE protein probably delivers the nickel.

It is found in the cytoplasm. Its function is as follows. Required for maturation of urease via the functional incorporation of the urease nickel metallocenter. Disruption of the ure1 gene cluster suggests that it protects brucellae during their passage through the stomach. The major route of infection in human brucellosis is oral. This Brucella abortus (strain 2308) protein is Urease accessory protein UreF 1.